The primary structure comprises 243 residues: Homeobox protein goosecoid isoform A (243 aa).

A DNA-binding region (homeobox) is located at residues 148 to 207 (KRRHRTIFTDEQLEALENLFQETKYPDVGTREQLARRVHLREEKVEVWFKNRRAKWRRQK). Residues 201-243 (AKWRRQKRSSSEESENAQKWNKSSKNSAEKADEQVKSDLDSDS) are disordered. Positions 217-226 (AQKWNKSSKN) are enriched in polar residues. Over residues 227 to 243 (SAEKADEQVKSDLDSDS) the composition is skewed to basic and acidic residues.

It belongs to the paired homeobox family. Bicoid subfamily. At the start of gastrulation, it is found in a patch of cells encompassing 60 degrees of arc on the dorsal marginal zone.

It localises to the nucleus. Plays a central role in executing Spemann's organizer phenomenon (the dorsal blastopore lip of the early Xenopus laevis gastrula can organize a complete secondary body axis when transplanted to another embryo). This chain is Homeobox protein goosecoid isoform A (gsc-a), found in Xenopus laevis (African clawed frog).